The primary structure comprises 132 residues: Matrix protein (132 aa).

The protein localises to the virion membrane. Its function is as follows. Envelope protein that may play a role in host-cell attachment and viral genome entry. The sequence is that of Matrix protein from Halorubrum pleomorphic virus 1 (HRPV-1).